The sequence spans 384 residues: GDSL esterase/lipase At1g71691 (384 aa).

An N-terminal signal peptide occupies residues methionine 1–glycine 27. The active-site Nucleophile is serine 62. Active-site residues include aspartate 348 and histidine 351.

It belongs to the 'GDSL' lipolytic enzyme family.

The protein localises to the secreted. The protein is GDSL esterase/lipase At1g71691 of Arabidopsis thaliana (Mouse-ear cress).